Here is a 179-residue protein sequence, read N- to C-terminus: tRNA (cytidine(56)-2'-O)-methyltransferase (179 aa).

S-adenosyl-L-methionine is bound by residues L82, 112–116 (GAEKV), and 130–137 (VGNQPHSE).

It belongs to the aTrm56 family. As to quaternary structure, homodimer.

It localises to the cytoplasm. It catalyses the reaction cytidine(56) in tRNA + S-adenosyl-L-methionine = 2'-O-methylcytidine(56) in tRNA + S-adenosyl-L-homocysteine + H(+). Specifically catalyzes the AdoMet-dependent 2'-O-ribose methylation of cytidine at position 56 in tRNAs. In Methanococcus maripaludis (strain C5 / ATCC BAA-1333), this protein is tRNA (cytidine(56)-2'-O)-methyltransferase.